Reading from the N-terminus, the 118-residue chain is Large ribosomal subunit protein eL18 (118 aa).

It belongs to the eukaryotic ribosomal protein eL18 family.

The chain is Large ribosomal subunit protein eL18 from Nanoarchaeum equitans (strain Kin4-M).